Here is a 410-residue protein sequence, read N- to C-terminus: Peptidase T (410 aa).

H77 contacts Zn(2+). Residue D79 is part of the active site. D140 serves as a coordination point for Zn(2+). Residue E174 is the Proton acceptor of the active site. Residues E175, D197, and H379 each contribute to the Zn(2+) site.

Belongs to the peptidase M20B family. Zn(2+) is required as a cofactor.

The protein localises to the cytoplasm. The catalysed reaction is Release of the N-terminal residue from a tripeptide.. Functionally, cleaves the N-terminal amino acid of tripeptides. In Desulfitobacterium hafniense (strain DSM 10664 / DCB-2), this protein is Peptidase T.